The chain runs to 319 residues: Transcription factor VBP (319 aa).

Low complexity-rich tracts occupy residues 1 to 31 and 143 to 158; these read MPGR…GAVA and ASAS…STAV. Disordered regions lie at residues 1 to 35 and 139 to 186; these read MPGR…QQPE and EKEP…DPDC. A compositionally biased stretch (polar residues) spans 159-180; it reads YQQSEAASSTESPPQNERNTPS. A bZIP domain is found at 243–306; that stretch reads DEKYWTRRKK…GRCKNIVSKY (64 aa). A basic motif region spans residues 245–265; sequence KYWTRRKKNNVAAKRSRDARR. A leucine-zipper region spans residues 266–273; that stretch reads LKENQITI.

It belongs to the bZIP family. PAR subfamily. As to quaternary structure, binds DNA as a homodimer or a heterodimer. Exists as a stable dimer in the absence of DNA. As to expression, isoform 1 and isoform 3 are expressed in a variety of somatic tissues, including liver, heart, intestine, stomach and kidney. Both isoforms are also expressed in hepatoma (LMH) cells and in embryonic fibroblast cell lines. Isoform 2 and isoform 4 are expressed in adult heart and intestine.

The protein resides in the nucleus. In terms of biological role, transcription factor that binds to and transactivates the vitellogenin II (VTG2) promoter. Binds to the palindromic sequence 5'-GTTTACATAAAC-3'. This chain is Transcription factor VBP (TEF), found in Gallus gallus (Chicken).